The primary structure comprises 223 residues: Guanylate kinase (223 aa).

The Guanylate kinase-like domain maps to 6–183; it reads GRLFVMTGAS…AVADFLAILT (178 aa). 13-20 serves as a coordination point for ATP; sequence GASGVGKG.

Belongs to the guanylate kinase family.

It localises to the cytoplasm. The enzyme catalyses GMP + ATP = GDP + ADP. Its function is as follows. Essential for recycling GMP and indirectly, cGMP. The polypeptide is Guanylate kinase (Thermus thermophilus (strain ATCC 27634 / DSM 579 / HB8)).